Reading from the N-terminus, the 305-residue chain is Aspartate carbamoyltransferase catalytic subunit (305 aa).

Arg53 and Thr54 together coordinate carbamoyl phosphate. Lys82 contributes to the L-aspartate binding site. Positions 103, 131, and 134 each coordinate carbamoyl phosphate. L-aspartate is bound by residues Arg164 and Arg226. Residues Leu265 and Pro266 each coordinate carbamoyl phosphate.

It belongs to the aspartate/ornithine carbamoyltransferase superfamily. ATCase family. Heterooligomer of catalytic and regulatory chains.

The enzyme catalyses carbamoyl phosphate + L-aspartate = N-carbamoyl-L-aspartate + phosphate + H(+). The protein operates within pyrimidine metabolism; UMP biosynthesis via de novo pathway; (S)-dihydroorotate from bicarbonate: step 2/3. Catalyzes the condensation of carbamoyl phosphate and aspartate to form carbamoyl aspartate and inorganic phosphate, the committed step in the de novo pyrimidine nucleotide biosynthesis pathway. This Ignicoccus hospitalis (strain KIN4/I / DSM 18386 / JCM 14125) protein is Aspartate carbamoyltransferase catalytic subunit.